The following is a 30-amino-acid chain: NLYQFKNMVQCVGTQLCVAYVKYGCYCGPG.

Ca(2+) contacts are provided by Tyr-26, Gly-28, and Gly-30.

This sequence belongs to the phospholipase A2 family. Group I subfamily. In terms of assembly, homodimer. It depends on Ca(2+) as a cofactor. Glycosylated. In terms of tissue distribution, expressed by the venom gland.

Its subcellular location is the secreted. It catalyses the reaction a 1,2-diacyl-sn-glycero-3-phosphocholine + H2O = a 1-acyl-sn-glycero-3-phosphocholine + a fatty acid + H(+). With respect to regulation, enzymatic activity is diminished by Cd(2+) and Hg(2+). Functionally, relatively highly potent phospholipase A2 that displays potent antimicrobial and hemolytic activities. It does not show cytotoxic effects on the three human cell lines tested. PLA2 catalyzes the calcium-dependent hydrolysis of the 2-acyl groups in 3-sn-phosphoglycerides. It shows similar potencies on both Gram-negative and Gram-positive bacteria: B.cereus (MIC&gt;9 ug/ml), B.subtilis (MIC&gt;12 ug/ml), E.faecalis (MIC&gt;7 ug/ml), S.epidermidis (MIC&gt;12 ug/ml), S.aureux (MIC&gt;5 ug/ml), E.coli (MIC&gt;7 ug/ml), K.pneumonia (MIC&gt;8 ug/ml), P.aeruginosa (MIC&gt;10 ug/ml), and S.enteric (MIC&gt;9 ug/ml). It also shows antifungal activities: A.niger (MIC&gt;15 ug/ml), B.cinerea (MIC&gt;12 ug/ml), F.solani (MIC&gt;15 ug/ml), and P.digitatum (MIC&gt;10 ug/ml). The protein is Non-toxic phospholipase A2 of Walterinnesia aegyptia (Desert black snake).